The sequence spans 182 residues: Peptidyl-tRNA hydrolase (182 aa).

Tyr-14 provides a ligand contact to tRNA. His-19 acts as the Proton acceptor in catalysis. TRNA is bound by residues Phe-64, Asn-66, and Asn-112.

Belongs to the PTH family. Monomer.

Its subcellular location is the cytoplasm. It carries out the reaction an N-acyl-L-alpha-aminoacyl-tRNA + H2O = an N-acyl-L-amino acid + a tRNA + H(+). Hydrolyzes ribosome-free peptidyl-tRNAs (with 1 or more amino acids incorporated), which drop off the ribosome during protein synthesis, or as a result of ribosome stalling. Its function is as follows. Catalyzes the release of premature peptidyl moieties from peptidyl-tRNA molecules trapped in stalled 50S ribosomal subunits, and thus maintains levels of free tRNAs and 50S ribosomes. This chain is Peptidyl-tRNA hydrolase, found in Wolbachia sp. subsp. Drosophila simulans (strain wRi).